The sequence spans 789 residues: Ribonucleoside-diphosphate reductase large subunit (789 aa).

Substrate is bound by residues T207, S222–C223, G253, N435–E439, and P620–S624. Residues C223 and C452 are joined by a disulfide bond. The active-site Proton acceptor is N435. Catalysis depends on C437, which acts as the Cysteine radical intermediate. E439 functions as the Proton acceptor in the catalytic mechanism.

It belongs to the ribonucleoside diphosphate reductase large chain family. Heterotetramer composed of a homodimer of the large subunit (R1) and a homodimer of the small subunit (R2). Larger multisubunit protein complex are also active, composed of (R1)n(R2)n.

It carries out the reaction a 2'-deoxyribonucleoside 5'-diphosphate + [thioredoxin]-disulfide + H2O = a ribonucleoside 5'-diphosphate + [thioredoxin]-dithiol. In terms of biological role, ribonucleoside-diphosphate reductase holoenzyme provides the precursors necessary for viral DNA synthesis. Allows virus growth in non-dividing cells, as well as reactivation from latency in infected hosts. Catalyzes the biosynthesis of deoxyribonucleotides from the corresponding ribonucleotides. The chain is Ribonucleoside-diphosphate reductase large subunit from Equus caballus (Horse).